Here is a 504-residue protein sequence, read N- to C-terminus: ATP synthase subunit alpha, chloroplastic (504 aa).

ATP is bound at residue 169-176 (GDRQTGKT).

It belongs to the ATPase alpha/beta chains family. As to quaternary structure, F-type ATPases have 2 components, CF(1) - the catalytic core - and CF(0) - the membrane proton channel. CF(1) has five subunits: alpha(3), beta(3), gamma(1), delta(1), epsilon(1). CF(0) has four main subunits: a, b, b' and c.

Its subcellular location is the plastid. It localises to the chloroplast thylakoid membrane. The catalysed reaction is ATP + H2O + 4 H(+)(in) = ADP + phosphate + 5 H(+)(out). In terms of biological role, produces ATP from ADP in the presence of a proton gradient across the membrane. The alpha chain is a regulatory subunit. This is ATP synthase subunit alpha, chloroplastic from Stigeoclonium helveticum (Green alga).